The following is a 283-amino-acid chain: Tetrahydroxynaphthalene reductase (283 aa).

The interval 1 to 21 (MPAVTQPRGESKYDAIPGPLG) is disordered. 39–63 (RGIGREMAMELGRRGCKVIVNYANS) is an NADP(+) binding site. Ser-164 is a substrate binding site. The active-site Proton acceptor is Tyr-178.

This sequence belongs to the short-chain dehydrogenases/reductases (SDR) family. In terms of assembly, homotetramer.

It carries out the reaction scytalone + NADP(+) = naphthalene-1,3,6,8-tetrol + NADPH + H(+). Its pathway is pigment biosynthesis; melanin biosynthesis. Catalyzes the NADPH-dependent reduction of 1,3,6,8-tetrahydroxynaphthalene (T4HN) into (+)-scytalone and 1,3,8-trihydroxynaphthalene into (-)-vermelone. This enzyme is the biochemical target of several commercially important fungicides which are used to prevent blast disease in rice plants. The chain is Tetrahydroxynaphthalene reductase from Pyricularia oryzae (strain 70-15 / ATCC MYA-4617 / FGSC 8958) (Rice blast fungus).